Reading from the N-terminus, the 171-residue chain is Ribosome maturation factor RimM (171 aa).

The PRC barrel domain occupies 97–170 (EGEYYYHEII…LVTIHVMEGL (74 aa)).

This sequence belongs to the RimM family. As to quaternary structure, binds ribosomal protein uS19.

It localises to the cytoplasm. In terms of biological role, an accessory protein needed during the final step in the assembly of 30S ribosomal subunit, possibly for assembly of the head region. Essential for efficient processing of 16S rRNA. May be needed both before and after RbfA during the maturation of 16S rRNA. It has affinity for free ribosomal 30S subunits but not for 70S ribosomes. This chain is Ribosome maturation factor RimM, found in Bacillus cereus (strain ATCC 14579 / DSM 31 / CCUG 7414 / JCM 2152 / NBRC 15305 / NCIMB 9373 / NCTC 2599 / NRRL B-3711).